Reading from the N-terminus, the 424-residue chain is Solute carrier family 67 member A1 (424 aa).

Helical transmembrane passes span 26 to 46 (ILLT…QFSI), 59 to 79 (IAFG…GPVF), 90 to 110 (AALT…AAAS), 156 to 176 (LGLC…TLVS), 184 to 204 (AILA…CIPA), 243 to 263 (IFLV…MFSI), 276 to 296 (AGYL…LVIG), 312 to 332 (VLVF…FHFC), 334 to 354 (LVPG…SMLI), and 391 to 411 (FGVP…LLVL).

The protein belongs to the major facilitator (TC 2.A.1) superfamily. Organic cation transporter (TC 2.A.1.19) family. In terms of assembly, interacts with RNF167. Expressed at high levels in adult and fetal kidney and liver, and adult colon. Expressed in fetal renal proximal tubules (at protein level). Expressed at lower levels in heart, brain and lung.

Its subcellular location is the apical cell membrane. May act as a transporter of organic cations based on a proton efflux antiport mechanism. May play a role in the transport of chloroquine and quinidine-related compounds in kidney. Plays a role in the regulation of lipid metabolism. This is Solute carrier family 67 member A1 from Homo sapiens (Human).